The following is an 874-amino-acid chain: Alanine--tRNA ligase (874 aa).

The Zn(2+) site is built by histidine 562, histidine 566, cysteine 664, and histidine 668.

It belongs to the class-II aminoacyl-tRNA synthetase family. Zn(2+) is required as a cofactor.

It is found in the cytoplasm. The enzyme catalyses tRNA(Ala) + L-alanine + ATP = L-alanyl-tRNA(Ala) + AMP + diphosphate. In terms of biological role, catalyzes the attachment of alanine to tRNA(Ala) in a two-step reaction: alanine is first activated by ATP to form Ala-AMP and then transferred to the acceptor end of tRNA(Ala). Also edits incorrectly charged Ser-tRNA(Ala) and Gly-tRNA(Ala) via its editing domain. The chain is Alanine--tRNA ligase from Neisseria meningitidis serogroup B (strain ATCC BAA-335 / MC58).